The primary structure comprises 63 residues: Disintegrin schistatin-like subunit B (63 aa).

Residues 1–63 (NSVNPCCDPQ…TPDCPRNRYN (63 aa)) enclose the Disintegrin domain. Intrachain disulfides connect Cys-6/Cys-29, Cys-20/Cys-26, Cys-25/Cys-50, and Cys-38/Cys-57. The Cell attachment site motif lies at 42–44 (RGD).

It belongs to the disintegrin family. Dimeric disintegrin subfamily. As to quaternary structure, heterodimer with subunit A; disulfide-linked. Expressed by the venom gland.

The protein resides in the secreted. Functionally, may bind to both alpha-IIb/beta-3 (ITGA2B/ITGB3) and alpha-V/beta-3 (ITGAV/ITGB3) integrins, and may inhibit platelet aggregation. In Echis carinatus (Saw-scaled viper), this protein is Disintegrin schistatin-like subunit B.